A 393-amino-acid chain; its full sequence is EPITTGLKTYPSVLNKKGTYTQSSQLTITESEVGSSKIYCEVRRGESVWIKEIPDCKGDKVHPTVILTQSSSEEITSRRFATVLCSIIDFHPESITVSWLKDGQHMESGFVTSPTCGVNGTFSATSRLTVPAREWFTNKVYTCQVSHQGVTQSRNITGSQVPCSCNDPVIKLLPPSIEQVLLEATVTLNCIVSNAPYGVNVSWTQEQKSLKSEIAVQPGEDADSVISTVNISTQAWLSGAEFYCVVNHQDLPTPLRASIHKEEVKDLREPSVSILLSPAEDVSAQRFLSLTCLVRGFSPREIFVKWTINDKSVNPGNYKNTEVMAENDNSSYFIYSLLSIAAEEWASGASYSCVVGHEAIPLKIINRTVNKSSGKPSFVNISLALLDTVNSCQ.

3 Ig-like domains span residues 63 to 157 (PTVI…RNIT), 168 to 260 (PVIK…ASIH), and 270 to 370 (PSVS…RTVN). Asn-119, Asn-155, Asn-200, Asn-230, Asn-329, Asn-366, Asn-370, and Asn-380 each carry an N-linked (GlcNAc...) asparagine glycan.

This Heterodontus francisci (Horn shark) protein is Ig heavy chain C region.